The chain runs to 834 residues: Transcription intermediary factor 1-beta (834 aa).

Ala-2 is subject to N-acetylalanine. Low complexity predominate over residues 13-23; the sequence is AATAASAASGS. Positions 13 to 56 are disordered; sequence AATAASAASGSPGSGEGSAGGEKRPAASSAAAASAAASSPAGGG. Ser-23, Ser-26, and Ser-30 each carry phosphoserine. Residue Lys-35 forms a Glycyl lysine isopeptide (Lys-Gly) (interchain with G-Cter in SUMO2) linkage. Over residues 38–52 the composition is skewed to low complexity; the sequence is AASSAAAASAAASSP. Ser-51 bears the Phosphoserine mark. An RING-type zinc finger spans residues 66–122; that stretch reads CGVCRERLRPERDPRLLPCLHSACSACLGPATPAAANNSGDGGSAGDGAMVDCPVCK. A Glycyl lysine isopeptide (Lys-Gly) (interchain with G-Cter in SUMO2) cross-link involves residue Lys-128. The residue at position 139 (Ser-139) is a Phosphoserine. The segment at 149 to 196 adopts a B box-type 1 zinc-finger fold; sequence DANQCCTSCEDNAPATSYCVECSEPLCETCVEAHQRVKYTKDHTVRST. Cys-154, Cys-157, Cys-178, and His-182 together coordinate Zn(2+). A Glycyl lysine isopeptide (Lys-Gly) (interchain with G-Cter in SUMO2) cross-link involves residue Lys-200. Residues 205–246 form a B box-type 2 zinc finger; sequence ERTVYCNVHKHEPLVLFCESCDTLTCRDCQLNAHKDHQYQFL. 4 residues coordinate Zn(2+): Cys-210, His-213, Cys-233, and His-238. The leucine zipper alpha helical coiled-coil region stretch occupies residues 247–377; the sequence is EDAVRNQRKL…LIYFQLHRAL (131 aa). The tract at residues 248 to 377 is interaction with MAGEC2; the sequence is DAVRNQRKLL…LIYFQLHRAL (130 aa). Residues Lys-255 and Lys-262 each participate in a glycyl lysine isopeptide (Lys-Gly) (interchain with G-Cter in SUMO2) cross-link. Lys-267 is modified (N6-acetyllysine). Residue Lys-273 forms a Glycyl lysine isopeptide (Lys-Gly) (interchain with G-Cter in SUMO2) linkage. At Lys-305 the chain carries N6-acetyllysine; alternate. Lys-305 is covalently cross-linked (Glycyl lysine isopeptide (Lys-Gly) (interchain with G-Cter in SUMO2); alternate). Residue Lys-320 forms a Glycyl lysine isopeptide (Lys-Gly) (interchain with G-Cter in SUMO2) linkage. An N6-acetyllysine modification is found at Lys-341. A Glycyl lysine isopeptide (Lys-Gly) (interchain with G-Cter in SUMO2) cross-link involves residue Lys-367. An involved in binding PPP1CA region spans residues 367-371; the sequence is KLIYF. Lys-378 bears the N6-acetyllysine; alternate mark. Lys-378 is covalently cross-linked (Glycyl lysine isopeptide (Lys-Gly) (interchain with G-Cter in SUMO2); alternate). Lys-378 is covalently cross-linked (Glycyl lysine isopeptide (Lys-Gly) (interchain with G-Cter in SUMO1); alternate). Lys-408 is covalently cross-linked (Glycyl lysine isopeptide (Lys-Gly) (interchain with G-Cter in SUMO2)). The interval 412 to 480 is disordered; sequence ERPGTNSTGP…SRSGEGEVSG (69 aa). Ser-418 carries the post-translational modification Phosphoserine. Lys-435 participates in a covalent cross-link: Glycyl lysine isopeptide (Lys-Gly) (interchain with G-Cter in SUMO2). The segment covering 435-444 has biased composition (polar residues); the sequence is KQGSGSSQPM. Residues Ser-438, Ser-440, and Ser-454 each carry the phosphoserine modification. Residue Lys-469 forms a Glycyl lysine isopeptide (Lys-Gly) (interchain with G-Cter in SUMO2); alternate linkage. Lys-469 participates in a covalent cross-link: Glycyl lysine isopeptide (Lys-Gly) (interchain with G-Cter in SUMO1); alternate. Position 470 is a citrulline (Arg-470). Phosphoserine is present on Ser-471. Arg-472 is subject to Citrulline. A phosphoserine mark is found at Ser-473, Ser-479, and Ser-489. The segment at 476 to 513 is HP1 box; sequence GEVSGLLRKVPRVSLERLDLDLTSDSQPPVFKVFPGST. A PxVxL motif motif is present at residues 481-494; the sequence is LLRKVPRVSLERLD. The residue at position 498 (Thr-498) is a Phosphothreonine. The residue at position 501 (Ser-501) is a Phosphoserine. A Glycyl lysine isopeptide (Lys-Gly) (interchain with G-Cter in SUMO2) cross-link involves residue Lys-507. Lys-554 participates in a covalent cross-link: Glycyl lysine isopeptide (Lys-Gly) (interchain with G-Cter in SUMO2); alternate. A Glycyl lysine isopeptide (Lys-Gly) (interchain with G-Cter in SUMO); alternate cross-link involves residue Lys-554. Lys-575 participates in a covalent cross-link: Glycyl lysine isopeptide (Lys-Gly) (interchain with G-Cter in SUMO2). The segment at 581–602 is disordered; sequence LTEGPGAEGPRLASPSGSTSSG. At Ser-594 the chain carries Phosphoserine. The segment at 625–672 adopts a PHD-type zinc-finger fold; it reads ATICRVCQKPGDLVMCNQCEFCFHLDCHLPALQDVPGEEWSCSLCHVL. Residue Lys-676 forms a Glycyl lysine isopeptide (Lys-Gly) (interchain with G-Cter in SUMO) linkage. Residues Ser-683, Ser-689, and Ser-697 each carry the phosphoserine modification. Residues 695-799 enclose the Bromo domain; it reads KLSPANQRKC…RFFETRMNDA (105 aa). Lys-750 participates in a covalent cross-link: Glycyl lysine isopeptide (Lys-Gly) (interchain with G-Cter in SUMO2); alternate. Residue Lys-750 forms a Glycyl lysine isopeptide (Lys-Gly) (interchain with G-Cter in SUMO1); alternate linkage. Lys-750 is covalently cross-linked (Glycyl lysine isopeptide (Lys-Gly) (interchain with G-Cter in SUMO); alternate). Residue Ser-752 is modified to Phosphoserine. The residue at position 755 (Tyr-755) is a Phosphotyrosine. Position 757 is a phosphoserine (Ser-757). 3 positions are modified to N6-acetyllysine; alternate: Lys-770, Lys-774, and Lys-779. Residues Lys-770, Lys-774, and Lys-779 each participate in a glycyl lysine isopeptide (Lys-Gly) (interchain with G-Cter in SUMO2); alternate cross-link. Residue Lys-779 forms a Glycyl lysine isopeptide (Lys-Gly) (interchain with G-Cter in SUMO1); alternate linkage. The residue at position 784 (Ser-784) is a Phosphoserine. Lys-804 is covalently cross-linked (Glycyl lysine isopeptide (Lys-Gly) (interchain with G-Cter in SUMO2)). A Phosphoserine; by ATM and ATR and dsDNA kinase modification is found at Ser-824.

Belongs to the TRIM/RBCC family. Oligomer; the RBCC domain homotrimerizes and interacts with one molecule of KRAB to form the KRAB-KAP1 corepressor complex. Interacts with SETX. Binding to a KRAB domain is an absolute requirement for silencing gene expression. Interacts with a number of KRAB-ZFP proteins including ZNF10, ZFP53, ZFP68, ZNF382 and ZNF256. Interacts with NCOR1, NR3C1 and CHD3. Interacts with CEBPB (via the RING-type and PHD-type zinc fingers). Interacts with CBX5 (via the PxVxL motif); the interaction occurs in interphase nuclei and competes for binding POGZ. Interacts with POGZ; the interaction competes for interaction with CBX5. Interacts with SETDB1; the interaction is enhanced by KAP1 sumoylation, stimulates SETDB1 histone methyltransferase activity and gene silencing. Interacts (via the PHD-type zinc finger) with UBE2I; the interaction is required for sumoylation and repressor activity. Component of the TRIM28/KAP1-ERBB4-MDM2 complex involved in connecting growth factor and DNA damage responses. Interacts directly with ERBB4; the interaction represses ERBB4-mediated transcription activity. Interacts with MDM2; the interaction contributes to p53/TP53 inactivation. Component of the TRIM28/KAP1-MDM2-p53/TP53; involved in regulating p53/TP53 stabilization and activity. Interacts (via the leucine zipper alpha helical coiled-coil) with E2F1 (central region); the interaction inhibits E2F1 acetylation and transcriptional activity. Interacts with PPP1CA; the interaction dephosphorylates TRIM28 at Ser-824 and forms a complex at the p21 promoter site. Interacts with PPP1CB; the interaction is weak but is increased on dephosphorylation at Ser-824. Interacts with CEBPB and NR3C1. Interacts with CBX5 (via the PxVxL motif); the interaction occurs in interphase nuclei and competes for binding POGZ. Component of a ternary complex that includes TRIM28, a HP1 protein (CBX1, CBX3 OR CBX5), a KRAB domain-containing protein, and DNA. Interacts with SMARCAD1. Interacts with, and sumoylates IRF7. Interacts with MAGEC2. Part of a complex composed of TRIM28, HDAC1, HDAC2 and EHMT2. Interacts (via the RBCC domain) with KOX1 (via the KRAB domain), ZNF268 (via the KRAB domain) and ZNF300 (via the KRAB domain); the interactions increase KOX1, ZNF268 and ZNF300 nuclear localization activities. Interacts with AICDA. The large PER complex involved in the histone methylation is composed of at least PER2, CBX3, TRIM28, SUV39H1 and/or SUV39H2; CBX3 mediates the formation of the complex. Interacts with NR4A3; the interactions potentiates NR4A3 activity on NurRE promoter. Interacts (unphosphorylated or phosphorylated form) with ZBTB1 (via BTB domain). Probably part of a corepressor complex containing ZNF304, TRIM28, SETDB1 and DNMT1. Interacts with ATRX. Forms a complex with ATRX, SETDB1 and ZNF274. Interacts with ZFP568; the interaction mediates ZFP568 transcriptional repression activity. Interacts with RRP1B. Interacts with CRY1. Interacts with ZNF263; recruited to the SIX3 promoter along with other proteins involved in chromatin modification and transcriptional corepression where it contributes to transcriptional repression. Interacts with CYREN (via XLF motif). Interacts with TRIM17; this interaction prevents TRIM28 activity. Interacts with ZNF746. Interacts with PHF13. Interacts with ZNF354C. Interacts with ZNF432; the interaction is independent of PARP1. Post-translationally, ATM-induced phosphorylation on Ser-824 represses sumoylation leading to the de-repression of expression of a subset of genes involved in cell cycle control and apoptosis in response to genotoxic stress. Dephosphorylation by the phosphatases, PPP1CA and PP1CB forms, allows sumoylation and expression of TRIM28 target genes. Sumoylation/desumoylation events regulate TRIM28-mediated transcriptional repression. Sumoylation is required for interaction with CHD3 and SETDB1 and the corepressor activity. Represses and is repressed by Ser-824 phosphorylation. Enhances the TRIM28 corepressor activity, inhibiting transcriptional activity of a number of genes including GADD45A and CDKN1A/p21. Lys-554, Lys-779 and Lys-804 are the major sites of sumoylation. In response to Dox-induced DNA damage, enhanced phosphorylation on Ser-824 prevents sumoylation and allows de-repression of CDKN1A/p21. In terms of processing, auto-ubiquitinated; enhanced by MAGEA2 and MAGEC2. Post-translationally, citrullinated by PADI4. ADP-ribosylated by SIRT6, promoting TRIM28/KAP1 interaction with CBX5, thereby contributing to the packaging of LINE-1 retrotransposon elements into transcriptionally repressive heterochromatin.

The protein localises to the nucleus. The enzyme catalyses S-ubiquitinyl-[E2 ubiquitin-conjugating enzyme]-L-cysteine + [acceptor protein]-L-lysine = [E2 ubiquitin-conjugating enzyme]-L-cysteine + N(6)-ubiquitinyl-[acceptor protein]-L-lysine.. Its pathway is protein modification; protein sumoylation. In terms of biological role, nuclear corepressor for KRAB domain-containing zinc finger proteins (KRAB-ZFPs). Mediates gene silencing by recruiting CHD3, a subunit of the nucleosome remodeling and deacetylation (NuRD) complex, and SETDB1 (which specifically methylates histone H3 at 'Lys-9' (H3K9me)) to the promoter regions of KRAB target genes. Enhances transcriptional repression by coordinating the increase in H3K9me, the decrease in histone H3 'Lys-9 and 'Lys-14' acetylation (H3K9ac and H3K14ac, respectively) and the disposition of HP1 proteins to silence gene expression. Recruitment of SETDB1 induces heterochromatinization. May play a role as a coactivator for CEBPB and NR3C1 in the transcriptional activation of ORM1. Also a corepressor for ERBB4. Inhibits E2F1 activity by stimulating E2F1-HDAC1 complex formation and inhibiting E2F1 acetylation. May serve as a partial backup to prevent E2F1-mediated apoptosis in the absence of RB1. Important regulator of CDKN1A/p21(CIP1). Has E3 SUMO-protein ligase activity toward itself via its PHD-type zinc finger. Specifically sumoylates IRF7, thereby inhibiting its transactivation activity. Ubiquitinates p53/TP53 leading to its proteasomal degradation; the function is enhanced by MAGEC2 and MAGEA2, and possibly MAGEA3 and MAGEA6. Mediates the nuclear localization of KOX1, ZNF268 and ZNF300 transcription factors. Probably forms a corepressor complex required for activated KRAS-mediated promoter hypermethylation and transcriptional silencing of tumor suppressor genes (TSGs) or other tumor-related genes in colorectal cancer (CRC) cells. Required to maintain a transcriptionally repressive state of genes in undifferentiated embryonic stem cells (ESCs). In ESCs, in collaboration with SETDB1, is also required for H3K9me3 and silencing of endogenous and introduced retroviruses in a DNA-methylation independent-pathway. Associates at promoter regions of tumor suppressor genes (TSGs) leading to their gene silencing. The SETDB1-TRIM28-ZNF274 complex may play a role in recruiting ATRX to the 3'-exons of zinc-finger coding genes with atypical chromatin signatures to establish or maintain/protect H3K9me3 at these transcriptionally active regions. Acts as a corepressor for ZFP568. In Mus musculus (Mouse), this protein is Transcription intermediary factor 1-beta.